The chain runs to 301 residues: Phosphatidylserine decarboxylase proenzyme (301 aa).

Residues D117, H173, and S260 each act as charge relay system; for autoendoproteolytic cleavage activity in the active site. The active-site Schiff-base intermediate with substrate; via pyruvic acid; for decarboxylase activity is S260. At S260 the chain carries Pyruvic acid (Ser); by autocatalysis.

Belongs to the phosphatidylserine decarboxylase family. PSD-B subfamily. Prokaryotic type II sub-subfamily. In terms of assembly, heterodimer of a large membrane-associated beta subunit and a small pyruvoyl-containing alpha subunit. It depends on pyruvate as a cofactor. Post-translationally, is synthesized initially as an inactive proenzyme. Formation of the active enzyme involves a self-maturation process in which the active site pyruvoyl group is generated from an internal serine residue via an autocatalytic post-translational modification. Two non-identical subunits are generated from the proenzyme in this reaction, and the pyruvate is formed at the N-terminus of the alpha chain, which is derived from the carboxyl end of the proenzyme. The autoendoproteolytic cleavage occurs by a canonical serine protease mechanism, in which the side chain hydroxyl group of the serine supplies its oxygen atom to form the C-terminus of the beta chain, while the remainder of the serine residue undergoes an oxidative deamination to produce ammonia and the pyruvoyl prosthetic group on the alpha chain. During this reaction, the Ser that is part of the protease active site of the proenzyme becomes the pyruvoyl prosthetic group, which constitutes an essential element of the active site of the mature decarboxylase.

It is found in the cell membrane. It catalyses the reaction a 1,2-diacyl-sn-glycero-3-phospho-L-serine + H(+) = a 1,2-diacyl-sn-glycero-3-phosphoethanolamine + CO2. It participates in phospholipid metabolism; phosphatidylethanolamine biosynthesis; phosphatidylethanolamine from CDP-diacylglycerol: step 2/2. In terms of biological role, catalyzes the formation of phosphatidylethanolamine (PtdEtn) from phosphatidylserine (PtdSer). The chain is Phosphatidylserine decarboxylase proenzyme from Chlamydia muridarum (strain MoPn / Nigg).